Here is a 106-residue protein sequence, read N- to C-terminus: Immunoglobulin lambda constant 1 (106 aa).

Residues 7–101 (PTVTLFPPSS…EGSTVEKTVA (95 aa)) enclose the Ig-like domain. A disulfide bridge links C28 with C87.

In terms of assembly, immunoglobulins are composed of two identical heavy chains and two identical light chains; disulfide-linked.

The protein localises to the secreted. The protein resides in the cell membrane. Functionally, constant region of immunoglobulin light chains. Immunoglobulins, also known as antibodies, are membrane-bound or secreted glycoproteins produced by B lymphocytes. In the recognition phase of humoral immunity, the membrane-bound immunoglobulins serve as receptors which, upon binding of a specific antigen, trigger the clonal expansion and differentiation of B lymphocytes into immunoglobulins-secreting plasma cells. Secreted immunoglobulins mediate the effector phase of humoral immunity, which results in the elimination of bound antigens. The antigen binding site is formed by the variable domain of one heavy chain, together with that of its associated light chain. Thus, each immunoglobulin has two antigen binding sites with remarkable affinity for a particular antigen. The variable domains are assembled by a process called V-(D)-J rearrangement and can then be subjected to somatic hypermutations which, after exposure to antigen and selection, allow affinity maturation for a particular antigen. The sequence is that of Immunoglobulin lambda constant 1 from Homo sapiens (Human).